A 146-amino-acid polypeptide reads, in one-letter code: MGRFIFVSFGLLVVFISLSGTEAGFCCPLGWSSYDEHCYQVFQQKMNWEDAEKFCTQQHTGSHLVSYESSEEVDFVVSKTLPILKASFVWIGLSNVWNACRLQWSDGTELMYNAWTAESECIASKTTDNQWWSMDCSSKRYVVCKF.

The first 23 residues, 1–23 (MGRFIFVSFGLLVVFISLSGTEA), serve as a signal peptide directing secretion. 3 disulfide bridges follow: Cys27/Cys38, Cys55/Cys144, and Cys121/Cys136. Residues 34 to 145 (YDEHCYQVFQ…CSSKRYVVCK (112 aa)) enclose the C-type lectin domain.

This sequence belongs to the snaclec family. As to quaternary structure, dimer and tetramer of heterodimers of alpha and beta subunits ((alphabeta)(2) and (alphabeta)(4)); disulfide-linked. These two multimeric forms are found. Post-translationally, the complex is glycosylated. In terms of tissue distribution, expressed by the venom gland.

Its subcellular location is the secreted. Functionally, potent platelet activator that acts via GPIb (GP1BA/GP1BB). After activation by the toxin, the receptor is redistributed on platelet surface thanks to cytoskeletal translocation. The indirect activation of integrin alpha-IIb/beta-3 (ITGA2B/ITGB3) also induced by the toxin is downstream the cytoskeletal translocation of GPIb. This Protobothrops mucrosquamatus (Taiwan habu) protein is Snaclec mucetin subunit beta.